The sequence spans 255 residues: Triosephosphate isomerase (255 aa).

9–11 (NWK) contacts substrate. H96 acts as the Electrophile in catalysis. E170 functions as the Proton acceptor in the catalytic mechanism. Substrate contacts are provided by residues G176, S216, and 237-238 (GG).

The protein belongs to the triosephosphate isomerase family. As to quaternary structure, homodimer.

The protein localises to the cytoplasm. The enzyme catalyses D-glyceraldehyde 3-phosphate = dihydroxyacetone phosphate. The protein operates within carbohydrate biosynthesis; gluconeogenesis. It participates in carbohydrate degradation; glycolysis; D-glyceraldehyde 3-phosphate from glycerone phosphate: step 1/1. Involved in the gluconeogenesis. Catalyzes stereospecifically the conversion of dihydroxyacetone phosphate (DHAP) to D-glyceraldehyde-3-phosphate (G3P). This is Triosephosphate isomerase from Magnetococcus marinus (strain ATCC BAA-1437 / JCM 17883 / MC-1).